The sequence spans 282 residues: Putative polysaccharide deacetylase YheN (282 aa).

The chain crosses the membrane as a helical span at residues 15-35 (LAFKFASLAVLCVLLLLMVIL). A NodB homology domain is found at 85–271 (KTVYLTFDDG…KLKEKGYSFG (187 aa)).

It belongs to the polysaccharide deacetylase family.

It localises to the cell membrane. This is Putative polysaccharide deacetylase YheN (yheN) from Bacillus subtilis (strain 168).